Reading from the N-terminus, the 909-residue chain is MANQLDASVKDDLKTQFVTREGTYRLLTLSEYSRPNRVGYSSNQSSPQVRVSMVTLPSPAQGKLGSDVGVGTPVGGGTAGANTTTTNGSSPGASPTGAAGASTAISNGGAGGDYSHSNHNSNSAGNNTVEARLGGGISMHSMMNGGVVDQNGVATNQVLGGDRICFNFGRDLYVYSFRGAKKGTEMSKPIDKKFYKGTNPSCHDFNISSATPTGAPLLVGFTTGQIQLVSPHVGPREVRKLFNEERLIDKTKVTCLKWLPNSPHLFLAAHASGHLYLYNEELPCAATAPSYQPFKLGDGYTILTSKSKTTRNPLFKWVFSTDNCCVNEFCFSPCGSHLAVVSQDGFLRVFHYDTMELLGIARSYFGGFLCVCWSPDGKYIVVGGEDDLVTVWSLHERRVVARGQGHRSWVSVVAFDPYTTSYTNWDGGDFSDDENQMNEYSHSREARFSGDSTANGGFEGFDRNSTPVHADRNGPHSASFRSDASSAEKLMSYRLGSVSQDTQICLWDITEDVLRHPLVLRQPANSERAYLNGGVDEEAEAEDGIKVIRPVAMSGQATGQQAESGSCSPTREAAGGGTGNGAGEHSNSSSSKFSTANCTISSQSSPDDCDTEAATPASTSSNAGAGSVAGAGAVASTKQNNRNHGTGNSIKFPNCISATKSDSIDGGGGSGSGQRPSQTTSGYNSKTSNSSNKSSNSGSGFSAFNSLTQRLSNFSFLSSSEKKGAGYEGSHSTAHRQHRKAMSMLKSYNQHNHTGGHNNHSQSNNSSSSNFGHSSTLDSNAAGAIGSSSTAHSFGSLKLSRSSHHSSLATAAHASGSAAGSGSGVSSFDPMQLIGTPACPRFDECPLLEPLVCKKIAHERLTALIFREDCFLTACQDGFIYTWARPGHATHATQHLSPGQAAAPGGTVI.

The segment at 58 to 132 (SPAQGKLGSD…SAGNNTVEAR (75 aa)) is disordered. Composition is skewed to low complexity over residues 80–107 (GANT…AISN) and 115–127 (SHSN…AGNN). WD repeat units follow at residues 248 to 288 (IDKT…AATA), 321 to 362 (TDNC…GIAR), 363 to 402 (SYFG…VVAR), and 470 to 517 (ADRN…LRHP). Disordered regions lie at residues 458-483 (FEGF…FRSD), 554-628 (SGQA…AGSV), 661-699 (SDSI…NSGS), 720-739 (SEKK…RQHR), and 749-775 (NQHN…GHSS). Polar residues-rich tracts occupy residues 555–569 (GQAT…SCSP) and 595–606 (TANCTISSQSSP). 2 stretches are compositionally biased toward low complexity: residues 612-628 (EAAT…AGSV) and 673-699 (GQRP…NSGS). One copy of the WD 5 repeat lies at 856 to 893 (IAHERLTALIFREDCFLTACQDGFIYTWARPGHATHAT).

As to quaternary structure, component of the Usp12-46 deubiquitylase complex consisting of Usp12-46, Wdr20 and Uaf1; regulatory subunit that, together with Uaf1, stabilizes Usp12-46. The Usp12-46 deubiquitylase complex associates with arr/arrow; the interaction leads to deubiquitination and stabilization of arr/arrow.

Its function is as follows. Regulatory component of the Usp12-46 deubiquitylase complex. This complex deubiquitylates the wg/wingless-signaling receptor arr/arrow, which stabilizes the receptor and increases its concentration at the cell surface; this enhances the sensitivity of cells to wg/wingless-signal stimulation. This increases the amplitude and spatial range of the signaling response to the wg/wingless morphogen gradient, facilitating the precise concentration-dependent regulation of its target genes. Required for wg/wingless-mediated signaling in the wing imaginal disc and for wg/wingless-dependent regulation of intestinal stem cell proliferation. This Drosophila melanogaster (Fruit fly) protein is WD repeat-containing protein 20 homolog.